The sequence spans 199 residues: V-set and transmembrane domain-containing protein 5 (199 aa).

Residues 1 to 27 (MRPPRCVGRTQGIPLGLLAFWVATARC) form the signal peptide. The Extracellular portion of the chain corresponds to 28-146 (LQSQGVSLYI…VSEIRYEDLH (119 aa)). Residues 36 to 138 (YIPRSAINAT…QSGTILLHVS (103 aa)) form the Ig-like C2-type domain. N-linked (GlcNAc...) asparagine glycans are attached at residues asparagine 43, asparagine 87, and asparagine 101. Residues 147–167 (FVAVFFALLAAVAVVLISLMW) traverse the membrane as a helical segment. Residues 168-199 (VCNQCAYKFQRKRRYKLRESTTEEIEMKDVEC) lie on the Cytoplasmic side of the membrane. The important for CDC42-dependent filopodia induction stretch occupies residues 169–185 (CNQCAYKFQRKRRYKLR).

Can homooligomerize through cis interactions within the same cell membrane. Post-translationally, N-glycosylated.

Its subcellular location is the cell membrane. It localises to the cell projection. The protein resides in the dendrite. The protein localises to the axon. Its function is as follows. Cell adhesion-like membrane protein of the central nervous system (CNS) which modulates both the position and complexity of central neurons by altering their membrane morphology and dynamics. Involved in the formation of neuronal dendrites and protrusions including dendritic filopodia. In synaptogenesis, regulates synapse formation by altering dendritic spine morphology and actin distribution. Promotes formation of unstable neuronal spines such as thin and branched types. Regulates neuronal morphogenesis and migration during cortical development in the brain. The protein is V-set and transmembrane domain-containing protein 5 (Vstm5) of Rattus norvegicus (Rat).